Here is a 91-residue protein sequence, read N- to C-terminus: Small ribosomal subunit protein uS19 (91 aa).

This sequence belongs to the universal ribosomal protein uS19 family.

In terms of biological role, protein S19 forms a complex with S13 that binds strongly to the 16S ribosomal RNA. The protein is Small ribosomal subunit protein uS19 of Synechococcus elongatus (strain ATCC 33912 / PCC 7942 / FACHB-805) (Anacystis nidulans R2).